Consider the following 156-residue polypeptide: Small ribosomal subunit protein uS7 (156 aa).

This sequence belongs to the universal ribosomal protein uS7 family. In terms of assembly, part of the 30S ribosomal subunit. Contacts proteins S9 and S11.

In terms of biological role, one of the primary rRNA binding proteins, it binds directly to 16S rRNA where it nucleates assembly of the head domain of the 30S subunit. Is located at the subunit interface close to the decoding center, probably blocks exit of the E-site tRNA. The sequence is that of Small ribosomal subunit protein uS7 from Gloeobacter violaceus (strain ATCC 29082 / PCC 7421).